The chain runs to 662 residues: Probable quinol oxidase subunit 1 (662 aa).

2 helical membrane-spanning segments follow: residues 14–34 and 58–78; these read WMIT…IAVI and LMYL…ALLL. Residue H102 coordinates Fe(II)-heme a. Transmembrane regions (helical) follow at residues 103-123, 140-160, 187-207, 228-248, 273-293, 311-331, 336-356, and 376-396; these read GVIM…NVVV, ISFW…IIGG, VAIQ…FVTI, FITT…LALM, FFWV…FGIY, MVWA…HHFF, GALI…PTGV, and MLFS…GVML. Cu cation contacts are provided by H279, Y283, H328, and H329. The segment at residues 279–283 is a cross-link (1'-histidyl-3'-tyrosine (His-Tyr)); the sequence is HPEVY. Heme a3 is bound at residue H414. 5 helical membrane-spanning segments follow: residues 415–435, 451–471, 492–512, 586–605, and 609–628; these read FHYT…IFWY, CFWL…ILGL, VIST…VVSI, THTG…FLIF, and IPAA…QSFV. H416 lines the Fe(II)-heme a pocket.

Belongs to the heme-copper respiratory oxidase family. The cofactor is Cu cation. Ferriheme a serves as cofactor. Heme A3. is required as a cofactor.

The protein resides in the cell membrane. The enzyme catalyses 2 a quinol + O2 = 2 a quinone + 2 H2O. The protein operates within energy metabolism; oxidative phosphorylation. In terms of biological role, catalyzes quinol oxidation with the concomitant reduction of oxygen to water. The sequence is that of Probable quinol oxidase subunit 1 (qoxB) from Staphylococcus haemolyticus (strain JCSC1435).